We begin with the raw amino-acid sequence, 329 residues long: Acetyl-coenzyme A carboxylase carboxyl transferase subunit alpha (329 aa).

The CoA carboxyltransferase C-terminal domain maps to Gln-40 to Glu-294.

This sequence belongs to the AccA family. As to quaternary structure, acetyl-CoA carboxylase is a heterohexamer composed of biotin carboxyl carrier protein (AccB), biotin carboxylase (AccC) and two subunits each of ACCase subunit alpha (AccA) and ACCase subunit beta (AccD).

The protein resides in the cytoplasm. It catalyses the reaction N(6)-carboxybiotinyl-L-lysyl-[protein] + acetyl-CoA = N(6)-biotinyl-L-lysyl-[protein] + malonyl-CoA. The protein operates within lipid metabolism; malonyl-CoA biosynthesis; malonyl-CoA from acetyl-CoA: step 1/1. In terms of biological role, component of the acetyl coenzyme A carboxylase (ACC) complex. First, biotin carboxylase catalyzes the carboxylation of biotin on its carrier protein (BCCP) and then the CO(2) group is transferred by the carboxyltransferase to acetyl-CoA to form malonyl-CoA. The polypeptide is Acetyl-coenzyme A carboxylase carboxyl transferase subunit alpha (Prochlorococcus marinus (strain SARG / CCMP1375 / SS120)).